Consider the following 227-residue polypeptide: UPF0173 metal-dependent hydrolase Oter_4201 (227 aa).

It belongs to the UPF0173 family.

In Opitutus terrae (strain DSM 11246 / JCM 15787 / PB90-1), this protein is UPF0173 metal-dependent hydrolase Oter_4201.